A 224-amino-acid polypeptide reads, in one-letter code: MPDNPTGTLPEIILASASPRRRQILSEMGFIFSVCPSQAELYPDGSVAPAEFAVLNAQIKARDIASKYSNGLIIAADTIVVDDFGILGKPSSKKVALNYLSRLGGKPHTVISSVCLLNTENGQIRSATCQSTLTMRPYTQAEAQRYVDSGLPMDKAGAYGIQDKEFNPVENIQGCYLNVVGLPACTLVRLINEMGFNPKLARNWKPEGDCTLCRIYRTEISRLR.

Asp77 functions as the Proton acceptor in the catalytic mechanism.

This sequence belongs to the Maf family. YhdE subfamily. The cofactor is a divalent metal cation.

It is found in the cytoplasm. The catalysed reaction is dTTP + H2O = dTMP + diphosphate + H(+). It catalyses the reaction UTP + H2O = UMP + diphosphate + H(+). Nucleoside triphosphate pyrophosphatase that hydrolyzes dTTP and UTP. May have a dual role in cell division arrest and in preventing the incorporation of modified nucleotides into cellular nucleic acids. The chain is dTTP/UTP pyrophosphatase from Dehalococcoides mccartyi (strain ATCC BAA-2100 / JCM 16839 / KCTC 5957 / BAV1).